A 519-amino-acid polypeptide reads, in one-letter code: Histidine--tRNA ligase, cytoplasmic (519 aa).

L-histidine is bound by residues 135-137, Arg-162, Gln-178, Asp-182, Arg-331, and 335-336; these read DLT and YY.

This sequence belongs to the class-II aminoacyl-tRNA synthetase family. As to quaternary structure, homodimer.

Its subcellular location is the cytoplasm. It catalyses the reaction tRNA(His) + L-histidine + ATP = L-histidyl-tRNA(His) + AMP + diphosphate + H(+). Functionally, catalyzes the ATP-dependent ligation of histidine to the 3'-end of its cognate tRNA, via the formation of an aminoacyl-adenylate intermediate (His-AMP). Plays a role in axon guidance. The chain is Histidine--tRNA ligase, cytoplasmic (hars1) from Takifugu rubripes (Japanese pufferfish).